Reading from the N-terminus, the 420-residue chain is Meiotically up-regulated gene 137 protein (420 aa).

Residues 10–232 (NEKPLGDQRA…QNSLTPQKKI (223 aa)) form the BAR domain. In terms of domain architecture, SH3 spans 279–345 (KETVFVKAIY…PVNYCTRIYD (67 aa)). The tract at residues 398–420 (SQNVEASSQPIKIRKPLPEIPNK) is disordered.

The protein localises to the cytoplasm. It localises to the nucleus. Functionally, has a role in meiosis and sporulation. This is Meiotically up-regulated gene 137 protein (mug137) from Schizosaccharomyces pombe (strain 972 / ATCC 24843) (Fission yeast).